A 365-amino-acid chain; its full sequence is Phosphatidylcholine:ceramide cholinephosphotransferase 2 (365 aa).

Positions 9 to 50 are disordered; the sequence is LEGHLESQTNDSTNTYTSPTEAVEEEGKNGKGKPKTLSNGLR. The span at 14–28 shows a compositional bias: polar residues; that stretch reads ESQTNDSTNTYTSPT. Helical transmembrane passes span 80–100, 128–148, 159–179, 219–239, and 248–268; these read GIAFVYALFNLILTTVMITVV, FSVSEINGMVLVGLWITQWLF, FFFIMGTLYLYRCITMYVTTL, ILCGDFLFSGHTVVLTLTYLF, and FWWYHLVCWLLSAAGIICILV. H229 is an active-site residue. Active-site residues include H272 and D276. Residues 273-290 traverse the membrane as a helical segment; sequence YTVDVIIAYYITTRLFWW. Topologically, residues 291–365 are cytoplasmic; sequence YHSMANEKNL…KIGEDNEKST (75 aa). Residues C331, C332, C343, and C348 are each lipidated (S-palmitoyl cysteine).

Belongs to the sphingomyelin synthase family. In terms of processing, palmitoylated on Cys-331, Cys-332, Cys-343 and Cys-348; which plays an important role in plasma membrane localization. As to expression, highest expression is detected in cortical bone, followed by vertebrae, kidney and liver. Expression levels are very low in spleen, muscle, heart, brown fat and thymus. Expressed in macrophages.

The protein resides in the cell membrane. Its subcellular location is the golgi apparatus membrane. It catalyses the reaction an N-acylsphing-4-enine + a 1,2-diacyl-sn-glycero-3-phosphocholine = a sphingomyelin + a 1,2-diacyl-sn-glycerol. The catalysed reaction is an N-acylsphinganine + a 1,2-diacyl-sn-glycero-3-phosphocholine = an N-acylsphinganine-1-phosphocholine + a 1,2-diacyl-sn-glycerol. It carries out the reaction an N-acyl-(4R)-4-hydroxysphinganine + a 1,2-diacyl-sn-glycero-3-phosphocholine = an N-acyl-(4R)-4-hydroxysphinganine-phosphocholine + a 1,2-diacyl-sn-glycerol. The enzyme catalyses an N-acylsphing-4-enine + a 1,2-diacyl-sn-glycero-3-phosphoethanolamine = an N-acylsphing-4-enine 1-phosphoethanolamine + a 1,2-diacyl-sn-glycerol. It catalyses the reaction an N-acylsphinganine + a 1,2-diacyl-sn-glycero-3-phosphoethanolamine = an N-acylsphinganine-1-phosphoethanolamine + a 1,2-diacyl-sn-glycerol. The catalysed reaction is an N-acyl-(4R)-4-hydroxysphinganine + a 1,2-diacyl-sn-glycero-3-phosphoethanolamine = an N-acyl-(4R)-4-hydroxysphinganine-1-phosphoethanolamine + a 1,2-diacyl-sn-glycerol. It carries out the reaction 1,2-dihexadecanoyl-sn-glycero-3-phosphocholine + an N-acylsphing-4-enine = 1,2-dihexadecanoyl-sn-glycerol + a sphingomyelin. The enzyme catalyses 1-(9Z-octadecenoyl)-2-acyl-sn-3-glycerol + a sphingomyelin = a 1-(9Z-octadecenoyl)-2-acyl-sn-glycero-3-phosphocholine + an N-acylsphing-4-enine. It catalyses the reaction N-hexadecanoylsphinganine + a 1,2-diacyl-sn-glycero-3-phosphocholine = N-hexadecanoyl-sphinganine-1-phosphocholine + a 1,2-diacyl-sn-glycerol. The catalysed reaction is N-hexadecanoyl-(4R)-hydroxysphinganine + a 1,2-diacyl-sn-glycero-3-phosphocholine = N-hexadecanoyl-(4R)-hydroxysphinganine-phosphocholine + a 1,2-diacyl-sn-glycerol. It carries out the reaction N-hexadecanoylsphinganine + a 1,2-diacyl-sn-glycero-3-phosphoethanolamine = N-hexadecanoyl-sphinganine-1-phosphoethanolamine + a 1,2-diacyl-sn-glycerol. The enzyme catalyses N-hexadecanoyl-(4R)-hydroxysphinganine + a 1,2-diacyl-sn-glycero-3-phosphoethanolamine = N-hexadecanoyl-(4R)-hydroxysphinganine-1-phosphoethanolamine + a 1,2-diacyl-sn-glycerol. It participates in sphingolipid metabolism. Sphingomyelin synthase that primarily contributes to sphingomyelin synthesis and homeostasis at the plasma membrane. Catalyzes the reversible transfer of phosphocholine moiety in sphingomyelin biosynthesis: in the forward reaction transfers phosphocholine head group of phosphatidylcholine (PC) on to ceramide (CER) to form ceramide phosphocholine (sphingomyelin, SM) and diacylglycerol (DAG) as by-product, and in the reverse reaction transfers phosphocholine from SM to DAG to form PC and CER. The direction of the reaction appears to depend on the levels of CER and DAG in the plasma membrane. Does not use free phosphorylcholine or CDP-choline as donors. Can also transfer phosphoethanolamine head group of phosphatidylethanolamine (PE) on to ceramide (CER) to form ceramide phosphoethanolamine (CPE). Regulates receptor-mediated signal transduction via mitogenic DAG and proapoptotic CER, as well as via SM, a structural component of membrane rafts that serve as platforms for signal transduction and protein sorting. To a lesser extent, plays a role in secretory transport via regulation of DAG pool at the Golgi apparatus and its downstream effects on PRKD1. Required for normal bone matrix mineralization. This chain is Phosphatidylcholine:ceramide cholinephosphotransferase 2 (Sgms2), found in Mus musculus (Mouse).